The primary structure comprises 132 residues: Small ribosomal subunit protein uS8 (132 aa).

It belongs to the universal ribosomal protein uS8 family. In terms of assembly, part of the 30S ribosomal subunit. Contacts proteins S5 and S12.

Its function is as follows. One of the primary rRNA binding proteins, it binds directly to 16S rRNA central domain where it helps coordinate assembly of the platform of the 30S subunit. The sequence is that of Small ribosomal subunit protein uS8 from Rickettsia rickettsii (strain Sheila Smith).